Here is a 206-residue protein sequence, read N- to C-terminus: MARYIGPKCKLSRREGTDLFLKSGVRSIESKCKIDQLPGQHGAGRKRVTEYGLQLREKQKVRRIYGVLEKKFRLYYKEADRRKGSTGVNLLQLLESRLDNVVYRMGFASTRAEARQLVSHKSIQVNGQSVNIPSYEVSAGDVISIREKSRNQSRIAAALELSAQAGNVGWVEVDSSKFEGVFKTVPDRSDLSADISENLIVELYSK.

Residues 96-156 (SRLDNVVYRM…EKSRNQSRIA (61 aa)) enclose the S4 RNA-binding domain.

The protein belongs to the universal ribosomal protein uS4 family. In terms of assembly, part of the 30S ribosomal subunit. Contacts protein S5. The interaction surface between S4 and S5 is involved in control of translational fidelity.

Its function is as follows. One of the primary rRNA binding proteins, it binds directly to 16S rRNA where it nucleates assembly of the body of the 30S subunit. In terms of biological role, with S5 and S12 plays an important role in translational accuracy. In Hydrogenovibrio crunogenus (strain DSM 25203 / XCL-2) (Thiomicrospira crunogena), this protein is Small ribosomal subunit protein uS4.